The following is a 157-amino-acid chain: Nascent polypeptide-associated complex subunit beta (157 aa).

Residues 1–31 (MPVDPEKLAKLQKSTAKKVGGSRVKAKKGVK) are disordered. The 66-residue stretch at 33–98 (EQDDTKLIET…PQEKNITQLI (66 aa)) folds into the NAC-A/B domain. The interval 125–157 (NPKDFGAAGEAGATEEANEDIPDLVDQKFDDVE) is disordered. Positions 130-139 (GAAGEAGATE) are enriched in low complexity.

It belongs to the NAC-beta family. Part of the nascent polypeptide-associated complex (NAC), consisting of EGD2 and EGD1. NAC associates with ribosomes via EGD1.

The protein resides in the cytoplasm. The protein localises to the nucleus. Functionally, component of the nascent polypeptide-associated complex (NAC), a dynamic component of the ribosomal exit tunnel, protecting the emerging polypeptides from interaction with other cytoplasmic proteins to ensure appropriate nascent protein targeting. The NAC complex also promotes mitochondrial protein import by enhancing productive ribosome interactions with the outer mitochondrial membrane and blocks the inappropriate interaction of ribosomes translating non-secretory nascent polypeptides with translocation sites in the membrane of the endoplasmic reticulum. EGD1 may act as a transcription factor that exert a negative effect on the expression of several genes that are transcribed by RNA polymerase II. The polypeptide is Nascent polypeptide-associated complex subunit beta (EGD1) (Lodderomyces elongisporus (strain ATCC 11503 / CBS 2605 / JCM 1781 / NBRC 1676 / NRRL YB-4239) (Yeast)).